The sequence spans 717 residues: Fatty acid oxidation complex subunit alpha (717 aa).

Residues 1–190 (MIHAGNAITV…KDGAVDAVVA (190 aa)) are enoyl-CoA hydratase/isomerase. Asp298 provides a ligand contact to substrate. The tract at residues 313 to 717 (HPVNQAAVLG…MAANNKKFYG (405 aa)) is 3-hydroxyacyl-CoA dehydrogenase. NAD(+) contacts are provided by residues Met326, Asp345, 402–404 (VTE), Lys409, and Ser431. The active-site For 3-hydroxyacyl-CoA dehydrogenase activity is the His452. Position 455 (Asn455) interacts with NAD(+). Residue Asn502 participates in substrate binding.

In the N-terminal section; belongs to the enoyl-CoA hydratase/isomerase family. This sequence in the C-terminal section; belongs to the 3-hydroxyacyl-CoA dehydrogenase family. In terms of assembly, heterotetramer of two alpha chains (FadB) and two beta chains (FadA).

The enzyme catalyses a (3S)-3-hydroxyacyl-CoA + NAD(+) = a 3-oxoacyl-CoA + NADH + H(+). It catalyses the reaction a (3S)-3-hydroxyacyl-CoA = a (2E)-enoyl-CoA + H2O. The catalysed reaction is a 4-saturated-(3S)-3-hydroxyacyl-CoA = a (3E)-enoyl-CoA + H2O. It carries out the reaction (3S)-3-hydroxybutanoyl-CoA = (3R)-3-hydroxybutanoyl-CoA. The enzyme catalyses a (3Z)-enoyl-CoA = a 4-saturated (2E)-enoyl-CoA. It catalyses the reaction a (3E)-enoyl-CoA = a 4-saturated (2E)-enoyl-CoA. Its pathway is lipid metabolism; fatty acid beta-oxidation. In terms of biological role, involved in the aerobic and anaerobic degradation of long-chain fatty acids via beta-oxidation cycle. Catalyzes the formation of 3-oxoacyl-CoA from enoyl-CoA via L-3-hydroxyacyl-CoA. It can also use D-3-hydroxyacyl-CoA and cis-3-enoyl-CoA as substrate. This is Fatty acid oxidation complex subunit alpha from Acinetobacter baumannii (strain SDF).